Here is a 496-residue protein sequence, read N- to C-terminus: Fibronectin type III and SPRY domain-containing protein 1 (496 aa).

Residues 4–99 (QKEALRKIIT…ALESSEELLE (96 aa)) adopt a coiled-coil conformation. The 58-residue stretch at 105–162 (LLATDSKDFPQAAKQIKDGVTMAPAFRLSLKAKVSDNMSHLMVDFAQERRMLQALTFL) folds into the COS domain. A Fibronectin type-III domain is found at 164 to 268 (VPSAPVIDLT…EPVTLETPAF (105 aa)). A B30.2/SPRY domain is found at 268–477 (FMFRLDASTS…VTTGLQVPSS (210 aa)). The segment at 301–336 (KAREKDGKGRTASPVNSPARGTPSPKRMPSGRGGRD) is disordered. 2 positions are modified to omega-N-methylarginine: R310 and R320.

In terms of assembly, oligomerization is required for binding to microtubules.

It is found in the cytoplasm. The protein resides in the cytoskeleton. The protein localises to the microtubule organizing center. It localises to the centrosome. Its subcellular location is the nucleus. It is found in the cleavage furrow. May be involved in microtubule organization and stabilization. The sequence is that of Fibronectin type III and SPRY domain-containing protein 1 (FSD1) from Bos taurus (Bovine).